Here is a 1693-residue protein sequence, read N- to C-terminus: Latrophilin Cirl (1693 aa).

The Extracellular portion of the chain corresponds to 1–774 (MVLQGAKQRL…LFTMFDGNMR (774 aa)). One can recognise an SUEL-type lectin domain in the interval 30-119 (ACEGKKLTIE…KYLEAHYQCV (90 aa)). N-linked (GlcNAc...) asparagine glycans are attached at residues asparagine 147, asparagine 260, asparagine 306, and asparagine 345. Positions 190 to 309 (PPATHATPPG…GPSVSSNGSA (120 aa)) are disordered. 2 stretches are compositionally biased toward polar residues: residues 259–269 (SNATAPSNTRI) and 287–309 (KSSP…NGSA). The tract at residues 379–406 (SFDEDDEEMAGTSTTTPMSTSGDCLHNS) is disordered. The span at 390 to 399 (TSTTTPMSTS) shows a compositional bias: low complexity. 4 N-linked (GlcNAc...) asparagine glycosylation sites follow: asparagine 405, asparagine 662, asparagine 710, and asparagine 737. Residues 568–761 (RSVVQKVKNI…AILMDVVDEH (194 aa)) form the GAIN-B domain. 2 disulfide bridges follow: cysteine 716-cysteine 743 and cysteine 731-cysteine 745. Residues 716–761 (CVFWNYIDHAWSANGCSLESTNRTHSVCSCNHLTNFAILMDVVDEH) form a GPS region. Residues 775–795 (IFIYISIAICVVFIVIALLTL) form a helical membrane-spanning segment. At 796–808 (KLFNGVFVKSART) the chain is on the cytoplasmic side. A helical transmembrane segment spans residues 809–829 (SIYINIYICLLAIELLFLLGI). Residues 830–835 (EQTETS) are Extracellular-facing. The chain crosses the membrane as a helical span at residues 836–856 (IFCGFITVFLHCAILSGTSWF). Residues 857–882 (CYEAFHSYSTLTSDELLLEVDQTPKV) lie on the Cytoplasmic side of the membrane. Residues 883 to 903 (NCYYLLSYGLSLSVVAISLVI) form a helical membrane-spanning segment. The Extracellular segment spans residues 904 to 927 (NPSTYTQNDYCVLMEANAVFYATF). Residues 928 to 948 (VAPVLIFFMAAIGYTFLSWII) form a helical membrane-spanning segment. Residues 949 to 975 (MCRKSRTGLKTKEHTRLATVRFDIRCS) lie on the Cytoplasmic side of the membrane. The chain crosses the membrane as a helical span at residues 976–996 (FVFFLLLSAVWCSAYFYLRGA). Residues 997-1003 (KMDEDVT) lie on the Extracellular side of the membrane. A helical membrane pass occupies residues 1004–1024 (GIYGYNFICFNTLLGLYIFVF). Topologically, residues 1025–1693 (HCIQNEKIRR…VRCYLEPLAK (669 aa)) are cytoplasmic. A disordered region spans residues 1089–1109 (PLGTNDDAHDEQQQQQHMSAT). Phosphoserine occurs at positions 1165, 1256, and 1263. 4 disordered regions span residues 1237-1264 (KPNS…LHSR), 1279-1362 (KTKP…APPP), 1450-1529 (SRYG…LPPQ), and 1596-1678 (SMRG…SAML). A compositionally biased stretch (low complexity) spans 1307 to 1323 (QQQQQLRQQRQQQQQQL). Phosphoserine is present on residues serine 1324 and serine 1325. The span at 1337-1357 (LHLQHQQQQQQQRRAGGQQQL) shows a compositional bias: low complexity. Over residues 1464-1475 (RNQQQQQHSLAQ) the composition is skewed to polar residues. Composition is skewed to acidic residues over residues 1485–1498 (DEDD…EETT) and 1508–1521 (CDEE…DMED). Low complexity predominate over residues 1640 to 1663 (QQLQKLSPQSTTSSSSHTSHSNPH).

Belongs to the G-protein coupled receptor 2 family. LN-TM7 subfamily. In terms of assembly, forms a heterodimer, consisting of a large extracellular region non-covalently linked to a seven-transmembrane moiety. Proteolytically cleaved into 2 subunits, an extracellular subunit and a seven-transmembrane subunit.

Its subcellular location is the cell membrane. The chain is Latrophilin Cirl from Drosophila pseudoobscura pseudoobscura (Fruit fly).